Reading from the N-terminus, the 148-residue chain is Endoribonuclease YbeY (148 aa).

Zn(2+)-binding residues include His-102, His-106, and His-112.

Belongs to the endoribonuclease YbeY family. The cofactor is Zn(2+).

Its subcellular location is the cytoplasm. In terms of biological role, single strand-specific metallo-endoribonuclease involved in late-stage 70S ribosome quality control and in maturation of the 3' terminus of the 16S rRNA. This chain is Endoribonuclease YbeY, found in Phytoplasma mali (strain AT).